A 308-amino-acid chain; its full sequence is Glutaminase (308 aa).

Positions 66, 117, 161, 168, 192, 244, and 262 each coordinate substrate.

This sequence belongs to the glutaminase family. As to quaternary structure, homotetramer.

It carries out the reaction L-glutamine + H2O = L-glutamate + NH4(+). The polypeptide is Glutaminase (Cronobacter sakazakii (strain ATCC BAA-894) (Enterobacter sakazakii)).